A 316-amino-acid polypeptide reads, in one-letter code: Nucleotide-binding protein Sala_2050 (316 aa).

Gly18 to Ser25 contacts ATP. Residue Asp69–Ser72 participates in GTP binding. The tract at residues Gly283–Arg316 is disordered.

This sequence belongs to the RapZ-like family.

Functionally, displays ATPase and GTPase activities. This chain is Nucleotide-binding protein Sala_2050, found in Sphingopyxis alaskensis (strain DSM 13593 / LMG 18877 / RB2256) (Sphingomonas alaskensis).